Here is a 569-residue protein sequence, read N- to C-terminus: Carotenoid cleavage dioxygenase 8 homolog B, chloroplastic (569 aa).

The N-terminal 43 residues, 1–43 (MSPAMLQASSLCVSAALSGAASRPGRLASQGHQGKRAVAQPLA), are a transit peptide targeting the chloroplast. Residues 23 to 81 (RPGRLASQGHQGKRAVAQPLAASAVTEAAPPAPVVAPPARPVDAPRRRGGRGGGGGGGE) are disordered. Positions 52–62 (PPAPVVAPPAR) are enriched in pro residues. 4 residues coordinate Fe cation: histidine 251, histidine 301, histidine 368, and histidine 558.

It belongs to the carotenoid oxygenase family. The cofactor is Fe(2+). As to expression, expressed in parenchyma cells of the root stele, shoot apex, leaf buds, xylem parenchyma cells of the stem, inflorescences and panicles.

It is found in the plastid. Its subcellular location is the chloroplast. The catalysed reaction is 9-cis-10'-apo-beta-carotenal + 2 O2 = (2E,4E,6E)-7-hydroxy-4-methylhepta-2,4,6-trienal + (11R)-carlactone. It catalyses the reaction all-trans-10'-apo-beta-carotenal + O2 = (2E,4E,6E)-4-methylocta-2,4,6-trienedial + 13-apo-beta-carotenone. In terms of biological role, involved in strigolactones biosynthesis by cleaving the C(27) 9-cis-10'-apo-beta-carotenal produced by CCD7. Produces the C(19) carlactone and a C(8) hydroxyaldehyde. Also shows lower activity with all-trans-10'-apo-beta-carotenal producing a C(9) dialdehyde and the C(18) 13-apo-beta-carotenone. Strigolactones are hormones that inhibit tillering and shoot branching through the MAX-dependent pathway, contribute to the regulation of shoot architectural response to phosphate-limiting conditions and function as rhizosphere signal that stimulates hyphal branching of arbuscular mycorrhizal fungi and trigger seed germination of root parasitic weeds. The protein is Carotenoid cleavage dioxygenase 8 homolog B, chloroplastic (CCD8B) of Oryza sativa subsp. japonica (Rice).